A 293-amino-acid polypeptide reads, in one-letter code: Cbb3-type cytochrome c oxidase subunit FixP (293 aa).

A compositionally biased stretch (basic and acidic residues) spans 1–11 (MSTSHESHHAP). The disordered stretch occupies residues 1–25 (MSTSHESHHAPVDGAGGPSTTGHEW). A helical transmembrane segment spans residues 43–63 (FYATIIWAFGYWVAYPAWPLV). 2 Cytochrome c domains span residues 114–201 (LARA…RSLS) and 209–290 (PAAK…HTLG). Residues cysteine 127, cysteine 130, histidine 131, methionine 178, cysteine 222, cysteine 225, histidine 226, and methionine 267 each contribute to the heme c site.

Belongs to the CcoP / FixP family. As to quaternary structure, component of the cbb3-type cytochrome c oxidase at least composed of FixN, FixO, FixQ and FixP. It depends on heme c as a cofactor.

The protein localises to the cell inner membrane. The protein operates within energy metabolism; oxidative phosphorylation. Functionally, C-type cytochrome. Part of the cbb3-type cytochrome c oxidase complex. FixP subunit is required for transferring electrons from donor cytochrome c via its heme groups to FixO subunit. From there, electrons are shuttled to the catalytic binuclear center of FixN subunit where oxygen reduction takes place. The complex also functions as a proton pump. The chain is Cbb3-type cytochrome c oxidase subunit FixP from Azorhizobium caulinodans (strain ATCC 43989 / DSM 5975 / JCM 20966 / LMG 6465 / NBRC 14845 / NCIMB 13405 / ORS 571).